We begin with the raw amino-acid sequence, 328 residues long: MANSASPEQNQNHCSAINSSILLTQGNLPTLTLSGKIRVTVTFFLFLLSTAFNASFLLKLQKWTQRKEKGKKLSRMKVLLKHLTLANLLETLIVMPLDGMWNITVQWYAGEFLCKVLSYLKLFSMYAPAFMMVVISLDRSLAITRPLAVKSNSRLGRFMIGLAWLLSSIFAGPQLYIFRMIHLADSSGQTEGFSQCVTHGSFPQWWHQAFYNFFTFSCLFIIPLLIMLICNAKIMFTLTRVLQQDPHNLQLNQSKNNIPRARLRTLKMTVAFAASFIVCWTPYYVLGIWYWFDPEMVNRVSDPVNHFFFLFAFLNPCFDPLIYGYFSL.

Residues 1–38 lie on the Extracellular side of the membrane; sequence MANSASPEQNQNHCSAINSSILLTQGNLPTLTLSGKIR. N-linked (GlcNAc...) asparagine glycosylation is present at Asn-18. The chain crosses the membrane as a helical span at residues 39–58; it reads VTVTFFLFLLSTAFNASFLL. At 59 to 77 the chain is on the cytoplasmic side; the sequence is KLQKWTQRKEKGKKLSRMK. A helical membrane pass occupies residues 78–97; the sequence is VLLKHLTLANLLETLIVMPL. Residues 98-115 are Extracellular-facing; it reads DGMWNITVQWYAGEFLCK. Asn-102 is a glycosylation site (N-linked (GlcNAc...) asparagine). Cys-114 and Cys-196 are disulfide-bonded. The chain crosses the membrane as a helical span at residues 116-137; sequence VLSYLKLFSMYAPAFMMVVISL. The Cytoplasmic portion of the chain corresponds to 138-164; it reads DRSLAITRPLAVKSNSRLGRFMIGLAW. A helical transmembrane segment spans residues 165–184; sequence LLSSIFAGPQLYIFRMIHLA. At 185 to 212 the chain is on the extracellular side; it reads DSSGQTEGFSQCVTHGSFPQWWHQAFYN. The chain crosses the membrane as a helical span at residues 213-232; that stretch reads FFTFSCLFIIPLLIMLICNA. Topologically, residues 233 to 281 are cytoplasmic; sequence KIMFTLTRVLQQDPHNLQLNQSKNNIPRARLRTLKMTVAFAASFIVCWT. Residues 282–300 traverse the membrane as a helical segment; sequence PYYVLGIWYWFDPEMVNRV. The Extracellular segment spans residues 301–306; sequence SDPVNH. Residues 307–326 form a helical membrane-spanning segment; it reads FFFLFAFLNPCFDPLIYGYF. Topologically, residues 327-328 are cytoplasmic; that stretch reads SL.

It belongs to the G-protein coupled receptor 1 family. As to expression, pituitary gland.

The protein localises to the cell membrane. In terms of biological role, receptor for gonadotropin releasing hormone (GnRH) that mediates the action of GnRH to stimulate the secretion of the gonadotropic hormones luteinizing hormone (LH) and follicle-stimulating hormone (FSH). This receptor mediates its action by association with G-proteins that activate a phosphatidylinositol-calcium second messenger system. The protein is Gonadotropin-releasing hormone receptor (GNRHR) of Sus scrofa (Pig).